A 363-amino-acid polypeptide reads, in one-letter code: Probable dual-specificity RNA methyltransferase RlmN (363 aa).

Glu-106 serves as the catalytic Proton acceptor. One can recognise a Radical SAM core domain in the interval 112–345 (HEYGNSVCVT…VTIRREQGHD (234 aa)). Cysteines 119 and 350 form a disulfide. Residues Cys-126, Cys-130, and Cys-133 each coordinate [4Fe-4S] cluster. S-adenosyl-L-methionine-binding positions include 176–177 (GE), Ser-208, 231–233 (SLH), and Asn-307. Cys-350 acts as the S-methylcysteine intermediate in catalysis.

The protein belongs to the radical SAM superfamily. RlmN family. [4Fe-4S] cluster serves as cofactor.

The protein localises to the cytoplasm. It catalyses the reaction adenosine(2503) in 23S rRNA + 2 reduced [2Fe-2S]-[ferredoxin] + 2 S-adenosyl-L-methionine = 2-methyladenosine(2503) in 23S rRNA + 5'-deoxyadenosine + L-methionine + 2 oxidized [2Fe-2S]-[ferredoxin] + S-adenosyl-L-homocysteine. It carries out the reaction adenosine(37) in tRNA + 2 reduced [2Fe-2S]-[ferredoxin] + 2 S-adenosyl-L-methionine = 2-methyladenosine(37) in tRNA + 5'-deoxyadenosine + L-methionine + 2 oxidized [2Fe-2S]-[ferredoxin] + S-adenosyl-L-homocysteine. In terms of biological role, specifically methylates position 2 of adenine 2503 in 23S rRNA and position 2 of adenine 37 in tRNAs. In Bacillus velezensis (strain DSM 23117 / BGSC 10A6 / LMG 26770 / FZB42) (Bacillus amyloliquefaciens subsp. plantarum), this protein is Probable dual-specificity RNA methyltransferase RlmN.